Reading from the N-terminus, the 52-residue chain is uncharacterized protein (52 aa).

Helical transmembrane passes span 4-24 (IIIP…ISLE) and 25-45 (MSIV…FLFV).

It localises to the cell membrane. This is an uncharacterized protein from Bacillus subtilis (strain 168).